The chain runs to 333 residues: DNA-directed RNA polymerase subunit alpha (333 aa).

The tract at residues 1-234 (MQISVNEFLT…QQLAAFVDLK (234 aa)) is alpha N-terminal domain (alpha-NTD). The alpha C-terminal domain (alpha-CTD) stretch occupies residues 248 to 333 (IDPILLRPVD…SLKKDDKATA (86 aa)).

Belongs to the RNA polymerase alpha chain family. Homodimer. The RNAP catalytic core consists of 2 alpha, 1 beta, 1 beta' and 1 omega subunit. When a sigma factor is associated with the core the holoenzyme is formed, which can initiate transcription.

It carries out the reaction RNA(n) + a ribonucleoside 5'-triphosphate = RNA(n+1) + diphosphate. DNA-dependent RNA polymerase catalyzes the transcription of DNA into RNA using the four ribonucleoside triphosphates as substrates. This is DNA-directed RNA polymerase subunit alpha from Pseudomonas syringae pv. tomato (strain ATCC BAA-871 / DC3000).